A 1264-amino-acid polypeptide reads, in one-letter code: Box A-binding factor (1264 aa).

Basic and acidic residues predominate over residues 1 to 11 (MTKTTKPKEKA). Disordered stretches follow at residues 1–25 (MTKTTKPKEKAAAGGAVIGSGSGLG), 161–200 (TASDTAATSEAAIDDDPSAINTNNNNNNSKAQNDASESVK), 234–253 (LISHHQQEQHQQAQQQQHQQ), 405–463 (QLHQ…HALS), 523–585 (NQTQ…SAAT), and 599–627 (HNSSLEDGYGSPRSSHSGGGGGGTLPAFQ). The span at 16–25 (AVIGSGSGLG) shows a compositional bias: gly residues. Over residues 161–171 (TASDTAATSEA) the composition is skewed to low complexity. Over residues 189–198 (SKAQNDASES) the composition is skewed to polar residues. The segment covering 409–421 (QQHHHQQQLHHHQ) has biased composition (basic residues). Low complexity-rich tracts occupy residues 422-438 (QQQQQLYHQQQQQQQQQ), 447-459 (STSSAGGDSPSSS), and 523-554 (NQTQAHLQQQHHQQQQQQHQQHQQQQLQQQQQ). Residues 555-564 (QHHHNQHQHH) are compositionally biased toward basic residues. Low complexity-rich tracts occupy residues 565 to 585 (NSSSSSPGPAGLHHSSSSAAT) and 599 to 614 (HNSSLEDGYGSPRSSH). The GATA-type zinc-finger motif lies at 803 to 827 (CSNCHTTHTSLWRRNPAGEPVCNAC). 3 disordered regions span residues 841 to 867 (TMKKDTIQKRKRKPKGTKSEKSKSKSK), 899 to 1048 (DDMK…SNEN), and 1181 to 1202 (EEMDQSQQQQQQQQHQQQQHGE). Low complexity-rich tracts occupy residues 909 to 950 (PYNS…GSTS) and 985 to 1007 (QMSPLNMQQHQQQQSCSMQHSPS). The span at 1008–1023 (TPTSIFNTPSPTHQLH) shows a compositional bias: polar residues. Composition is skewed to low complexity over residues 1024–1048 (NNNNNNNNSSIFNNNNNNNSSSNEN) and 1185–1200 (QSQQQQQQQQHQQQQH). S1208 and S1210 each carry phosphoserine.

As to quaternary structure, interacts (via GATA-type Zn-finger domain) with Bfc; this interaction enhances srp binding to the promoter of crq/croquemort.

It is found in the nucleus. May function as a transcriptional activator protein and may play a key role in the organogenesis of the fat body. Binds a sequence element (5'-[TA]GATAA-3') found in the larval promoters of all known alcohol dehydrogenase (ADH) genes. Acts as a homeotic gene downstream of the terminal gap gene HKB to promote morphogenesis and differentiation of anterior and posterior midgut. Together with transcriptional cofactor Bfc directly binds the promoter of phagocytic receptor crq/croquemort to upregulate its expression and stimulate efferocytosis in response to apoptotic cells, including during embryogenesis. This is Box A-binding factor (srp) from Drosophila melanogaster (Fruit fly).